The primary structure comprises 373 residues: Diels-Alderase (373 aa).

Belongs to the Diels-Alderase family.

The enzyme catalyses (5S)-3-[(2E,6R,8E,10E,12E)-2,6-dimethyltetradeca-2,8,10,12-tetraenoyl]-5-(hydroxymethyl)pyrrolidine-2,4-dione = trichosetin. It participates in mycotoxin biosynthesis. Hybrid PKS-NRPS synthetase; part of the gene cluster that mediates the biosynthesis of trichosetin, a trans-fused decalin-containing tetramic acid with antimicrobial activity. The PKS module of PKS-NRPS1 together with the enoylreductase (ER) catalyze the formation of the polyketide unit which is then conjugated to L-serine by the condensation domain of the PKS-NRPS1 NRPS module. Activity of the Dieckmann cyclase domain (RED) results in release of the Dieckmann product intermediate. Diels-Alderase (DA) is involved in endo-selective Diels-Alder cycloaddition to form the decalin ring, leading to the production of N-desmethylequisetin also called trichosetin. The cluster does not contain the equisetin N-methyltransferase and consequently, trichosetin is isolated as final product. The chain is Diels-Alderase from Gibberella fujikuroi (strain CBS 195.34 / IMI 58289 / NRRL A-6831) (Bakanae and foot rot disease fungus).